The following is a 434-amino-acid chain: RHOMBOID-like protein 9, chloroplastic (434 aa).

Residues 1-68 (MALFPLHHEV…SPRRRLCLVR (68 aa)) constitute a chloroplast transit peptide. Transmembrane regions (helical) follow at residues 182-202 (FYAV…EAAA), 209-229 (MGLL…ILAG), 238-258 (MFLH…LTFG), 267-287 (LFTF…MSFL), 289-309 (TADP…AWLV), 326-346 (LFQK…FGPI), 352-372 (LGAL…LQLG), and 399-419 (FLLF…IGDG).

It belongs to the peptidase S54 family.

The protein localises to the plastid. It is found in the chloroplast membrane. Its function is as follows. Probable rhomboid-type serine protease that catalyzes intramembrane proteolysis. In Arabidopsis thaliana (Mouse-ear cress), this protein is RHOMBOID-like protein 9, chloroplastic.